Here is a 255-residue protein sequence, read N- to C-terminus: PHD finger protein ALFIN-LIKE 4 (255 aa).

An N-acetylmethionine modification is found at Met1. Residues 145 to 200 form a disordered region; sequence GKDKSSVSNNSSNRSKSSSKRGSESRAKFSKPEPKDDEEEEEEGVEEEDEDEQGET. Low complexity predominate over residues 150–160; that stretch reads SVSNNSSNRSK. Residues 165 to 178 show a composition bias toward basic and acidic residues; the sequence is RGSESRAKFSKPEP. The segment covering 179-198 has biased composition (acidic residues); sequence KDDEEEEEEGVEEEDEDEQG. Residues 199–251 form a PHD-type zinc finger; that stretch reads ETQCGACGESYAADEFWICCDLCEMWFHGKCVKITPARAEHIKQYKCPSCSNK.

This sequence belongs to the Alfin family. In terms of assembly, interacts with H3K4me3 and to a lesser extent with H3K4me2. In terms of tissue distribution, ubiquitously expressed.

The protein resides in the nucleus. Functionally, histone-binding component that specifically recognizes H3 tails trimethylated on 'Lys-4' (H3K4me3), which mark transcription start sites of virtually all active genes. The chain is PHD finger protein ALFIN-LIKE 4 (AL4) from Arabidopsis thaliana (Mouse-ear cress).